The chain runs to 225 residues: 2-C-methyl-D-erythritol 4-phosphate cytidylyltransferase (225 aa).

This sequence belongs to the IspD/TarI cytidylyltransferase family. IspD subfamily.

It carries out the reaction 2-C-methyl-D-erythritol 4-phosphate + CTP + H(+) = 4-CDP-2-C-methyl-D-erythritol + diphosphate. The protein operates within isoprenoid biosynthesis; isopentenyl diphosphate biosynthesis via DXP pathway; isopentenyl diphosphate from 1-deoxy-D-xylulose 5-phosphate: step 2/6. Catalyzes the formation of 4-diphosphocytidyl-2-C-methyl-D-erythritol from CTP and 2-C-methyl-D-erythritol 4-phosphate (MEP). This Haemophilus influenzae (strain 86-028NP) protein is 2-C-methyl-D-erythritol 4-phosphate cytidylyltransferase.